A 225-amino-acid polypeptide reads, in one-letter code: Dehydrin DHN4 (225 aa).

Residues 1-78 are disordered; the sequence is MEYQGQQHGR…EDDGMGGRRK (78 aa). Gly residues predominate over residues 21-39; the sequence is HGVGTGMGTHGGVGTGAAA. 5 tandem repeats follow at residues 105–118, 119–136, 137–159, 160–178, and 179–199. Positions 105–199 are 5 X approximate tandem repeats; that stretch reads YGQQGTGMAG…GTGMHGTGGT (95 aa).

It belongs to the plant dehydrin family.

In Hordeum vulgare (Barley), this protein is Dehydrin DHN4 (DHN4).